The following is a 110-amino-acid chain: UPF0060 membrane protein Veis_0342 (110 aa).

The next 4 membrane-spanning stretches (helical) occupy residues 8 to 28, 33 to 53, 63 to 83, and 90 to 110; these read VLFTITAVVEIVGCYLPWLVI, PLWLLLPAALSLALFAWLLTL, AAYGGIYIAVALAWLHWVDGV, and VAGATVAMVGMLIIMLQPASA.

Belongs to the UPF0060 family.

Its subcellular location is the cell inner membrane. This Verminephrobacter eiseniae (strain EF01-2) protein is UPF0060 membrane protein Veis_0342.